The chain runs to 104 residues: Large ribosomal subunit protein bL21c (104 aa).

It belongs to the bacterial ribosomal protein bL21 family. Part of the 50S ribosomal subunit.

The protein resides in the plastid. Its subcellular location is the chloroplast. This protein binds to 23S rRNA. The polypeptide is Large ribosomal subunit protein bL21c (Porphyra purpurea (Red seaweed)).